The chain runs to 273 residues: HTH-type transcriptional regulator NimR (273 aa).

Residues 158–258 enclose the HTH araC/xylS-type domain; it reads PKIRTMVEMM…GQTPGRYIAR (101 aa). 2 consecutive DNA-binding regions (H-T-H motif) follow at residues 178 to 199 and 225 to 248; these read GQWA…VKET and VQKV…KKGL.

Functionally, negatively regulates expression of the nimT operon and its own expression. Acts by binding to the nimR-nimT intergenic region. The polypeptide is HTH-type transcriptional regulator NimR (Escherichia coli (strain K12)).